We begin with the raw amino-acid sequence, 117 residues long: Large ribosomal subunit protein uL18 (117 aa).

Belongs to the universal ribosomal protein uL18 family. In terms of assembly, part of the 50S ribosomal subunit; part of the 5S rRNA/L5/L18/L25 subcomplex. Contacts the 5S and 23S rRNAs.

In terms of biological role, this is one of the proteins that bind and probably mediate the attachment of the 5S RNA into the large ribosomal subunit, where it forms part of the central protuberance. The protein is Large ribosomal subunit protein uL18 of Photobacterium profundum (strain SS9).